A 217-amino-acid chain; its full sequence is Pyrophosphatase PpaX (217 aa).

D11 functions as the Nucleophile in the catalytic mechanism.

The protein belongs to the HAD-like hydrolase superfamily. PpaX family. Requires Mg(2+) as cofactor.

The catalysed reaction is diphosphate + H2O = 2 phosphate + H(+). Hydrolyzes pyrophosphate formed during P-Ser-HPr dephosphorylation by HPrK/P. Might play a role in controlling the intracellular pyrophosphate pool. This Listeria welshimeri serovar 6b (strain ATCC 35897 / DSM 20650 / CCUG 15529 / CIP 8149 / NCTC 11857 / SLCC 5334 / V8) protein is Pyrophosphatase PpaX.